Here is a 372-residue protein sequence, read N- to C-terminus: Cytochrome b (372 aa).

A run of 4 helical transmembrane segments spans residues 25 to 45 (FGSM…FLAI), 69 to 90 (WIMQ…YIHI), 105 to 125 (WLSG…GYVL), and 170 to 190 (FFAL…IHII). Heme b is bound by residues H75 and H89. H174 and H188 together coordinate heme b. Residue H193 participates in a ubiquinone binding. 4 consecutive transmembrane segments (helical) span residues 218-238 (YKDM…LSFS), 280-300 (LGGT…PFTH), 312-332 (LTQT…WTAT), and 339-358 (FISI…IINP).

It belongs to the cytochrome b family. In terms of assembly, the cytochrome bc1 complex contains 3 respiratory subunits (MT-CYB, CYC1 and UQCRFS1), 2 core proteins (UQCRC1 and UQCRC2) and probably 6 low-molecular weight proteins. The cofactor is heme b.

It localises to the mitochondrion inner membrane. Its function is as follows. Component of the ubiquinol-cytochrome c reductase complex (complex III or cytochrome b-c1 complex) that is part of the mitochondrial respiratory chain. The b-c1 complex mediates electron transfer from ubiquinol to cytochrome c. Contributes to the generation of a proton gradient across the mitochondrial membrane that is then used for ATP synthesis. In Dendroaspis polylepis polylepis (Black mamba), this protein is Cytochrome b (MT-CYB).